Reading from the N-terminus, the 908-residue chain is NADH-quinone oxidoreductase subunit G (908 aa).

Positions 2–83 (ATIHVDGKEY…GTFISIDDEE (82 aa)) constitute a 2Fe-2S ferredoxin-type domain. C34, C45, C48, and C67 together coordinate [2Fe-2S] cluster. The region spanning 83–122 (EAKQFRESVVEWLMTNHPHDCPVCEEGGNCHLQDMTVMTG) is the 4Fe-4S His(Cys)3-ligated-type domain. [4Fe-4S] cluster-binding residues include H99, C103, C106, C112, C151, C154, C157, C201, C228, C231, C235, and C263. The 57-residue stretch at 221-277 (MQFAPSICQQCSIGCNISPGERYGELRRIENRYNGTVNHYFLCDRGRFGYGYVNLKD) folds into the 4Fe-4S Mo/W bis-MGD-type domain.

Belongs to the complex I 75 kDa subunit family. In terms of assembly, composed of 13 different subunits. Subunits NuoCD, E, F, and G constitute the peripheral sector of the complex. The cofactor is [2Fe-2S] cluster. Requires [4Fe-4S] cluster as cofactor.

It carries out the reaction a quinone + NADH + 5 H(+)(in) = a quinol + NAD(+) + 4 H(+)(out). Functionally, NDH-1 shuttles electrons from NADH, via FMN and iron-sulfur (Fe-S) centers, to quinones in the respiratory chain. The immediate electron acceptor for the enzyme in this species is believed to be ubiquinone. Couples the redox reaction to proton translocation (for every two electrons transferred, four hydrogen ions are translocated across the cytoplasmic membrane), and thus conserves the redox energy in a proton gradient. The protein is NADH-quinone oxidoreductase subunit G (nuoG) of Escherichia coli O157:H7.